The chain runs to 409 residues: uncharacterized protein (409 aa).

10 helical membrane-spanning segments follow: residues 53–73, 83–103, 115–135, 141–161, 183–203, 205–225, 243–263, 265–285, 299–319, and 329–349; these read IITLVGLLCNIGMYLIMYVHC, WCYFAVAFLIFAYQTLDNVDG, LGELFDHVCDALSVAMFAIVM, IGPYWTFFSFIVGMWPFYLAH, VLFMIIEIITGIFGSDIWTYG, STTVGKIATVFVSIGAVVTCL, CLLQLTPICLFTALIVIWASV, NLITEQPHLFIMTLGILFGYI, CSLFYPIFVPIIIVVLNSILA, and TVALWILFSIACAQFLLFSYF. Positions 388 to 401 are enriched in polar residues; it reads EEGSSSIGNSTDDI. Residues 388-409 are disordered; it reads EEGSSSIGNSTDDINPSEIEEI.

The protein belongs to the CDP-alcohol phosphatidyltransferase class-I family.

It is found in the membrane. This is an uncharacterized protein from Dictyostelium discoideum (Social amoeba).